The primary structure comprises 227 residues: Transmembrane emp24 domain-containing protein 4 (227 aa).

The signal sequence occupies residues 1–29; sequence MAGVGAGPLRAMGRQALLLLALCATGAQG. At 30–194 the chain is on the lumenal side; it reads LYFHIGETEK…RLTSESTNQR (165 aa). The 99-residue stretch at 39–137 folds into the GOLD domain; that stretch reads KRCFIEEIPD…KLRVHLDIQV (99 aa). N-linked (GlcNAc...) asparagine glycosylation is present at asparagine 117. Positions 147 to 176 form a coiled coil; the sequence is IAAKDKLTELQLRARQLLDQVEQIQKEQDY. The helical transmembrane segment at 195 to 212 threads the bilayer; that stretch reads VLWWSIAQTVILILTGIW. The Cytoplasmic portion of the chain corresponds to 213–227; that stretch reads QMRHLKSFFEAKKLV. A COPII vesicle coat-binding motif is present at residues 220–221; that stretch reads FF. A COPI vesicle coat-binding motif is present at residues 220-227; it reads FFEAKKLV.

This sequence belongs to the EMP24/GP25L family.

It is found in the endoplasmic reticulum membrane. In terms of biological role, involved in vesicular protein trafficking, mainly in the early secretory pathway. targeting. Involved in the maintenance of the Golgi apparatus. Appears to play a role in the biosynthesis of secreted cargo including processing. Involved in endoplasmic reticulum stress response. May play a role in the regulation of heat-shock response and apoptosis. This chain is Transmembrane emp24 domain-containing protein 4 (TMED4), found in Homo sapiens (Human).